The primary structure comprises 217 residues: External core antigen (217 aa).

Positions 1 to 20 (MYLFHLCLVFACVSCPTVQA) are cleaved as a signal peptide. An HBEAG region spans residues 26-28 (GWL). The span at 181 to 210 (RRGSARVVRSPRRRTPSPRRRRSQSPRRRP) shows a compositional bias: basic residues. The tract at residues 181–217 (RRGSARVVRSPRRRTPSPRRRRSQSPRRRPQSPASNC) is disordered. The stretch at 190-196 (SPRRRTP) is one 1; half-length repeat. The tract at residues 190–211 (SPRRRTPSPRRRRSQSPRRRPQ) is 3 X 8 AA approximate repeats of S-P-R-R-R-R-[PS]-Q. The propeptide occupies 190 to 217 (SPRRRTPSPRRRRSQSPRRRPQSPASNC). A run of 2 repeats spans residues 197–204 (SPRRRRSQ) and 205–211 (SPRRRPQ).

It belongs to the orthohepadnavirus precore antigen family. In terms of assembly, homodimerizes. Post-translationally, phosphorylated. Cleaved by host furin.

The protein localises to the secreted. The protein resides in the host nucleus. May regulate immune response to the intracellular capsid in acting as a T-cell tolerogen, by having an immunoregulatory effect which prevents destruction of infected cells by cytotoxic T-cells. This immune regulation may predispose to chronicity during perinatal infections and prevent severe liver injury during adult infections. The chain is External core antigen from Urocitellus parryii kennicottii (ASHV).